A 118-amino-acid polypeptide reads, in one-letter code: Ribosome-binding factor A (118 aa).

The protein belongs to the RbfA family. As to quaternary structure, monomer. Binds 30S ribosomal subunits, but not 50S ribosomal subunits or 70S ribosomes.

The protein resides in the cytoplasm. One of several proteins that assist in the late maturation steps of the functional core of the 30S ribosomal subunit. Associates with free 30S ribosomal subunits (but not with 30S subunits that are part of 70S ribosomes or polysomes). Required for efficient processing of 16S rRNA. May interact with the 5'-terminal helix region of 16S rRNA. This Bacillus cereus (strain AH187) protein is Ribosome-binding factor A.